Reading from the N-terminus, the 586-residue chain is U-box domain-containing protein 73 (586 aa).

Positions 21 to 122 are disordered; it reads KADMSGLQRS…AAGADDGPTR (102 aa). Residues 50 to 60 are compositionally biased toward low complexity; it reads RSAPTSPLRTP. The U-box domain maps to 182 to 258; it reads PIPIAHDGTL…SAWCLDHSDL (77 aa).

The catalysed reaction is S-ubiquitinyl-[E2 ubiquitin-conjugating enzyme]-L-cysteine + [acceptor protein]-L-lysine = [E2 ubiquitin-conjugating enzyme]-L-cysteine + N(6)-ubiquitinyl-[acceptor protein]-L-lysine.. The protein operates within protein modification; protein ubiquitination. Its function is as follows. Possesses E3 ubiquitin-protein ligase in vitro. This chain is U-box domain-containing protein 73 (PUB73), found in Oryza sativa subsp. japonica (Rice).